Reading from the N-terminus, the 414-residue chain is MTQANLSETLFKPRFKHPETSTLVRRFNHGAQPPVQSALDGKTIPHWYRMINRLMWIWRGIDPREILDVQARIVMSDAERTDDDLYDTVIGYRGGNWIYEWATQAMVWQQKACAEEDPQLSGRHWLHAATLYNIAAYPHLKGDDLAEQAQALSNRAYEEAAQRLPGTMRQMEFTVPGGAPITGFLHMPKGDGPFPTVLMCGGLDAMQTDYYSLYERYFAPRGIAMLTIDMPSVGFSSKWKLTQDSSLLHQHVLKALPNVPWVDHTRVAAFGFRFGANVAVRLAYLESPRLKAVACLGPVVHTLLSDFKCQQQVPEMYLDVLASRLGMHDASDEALRVELNRYSLKVQGLLGRRCPTPMLSGYWKNDPFSPEEDSRLITSSSADGKLLEIPFNPVYRNFDKGLQEITDWIEKRLC.

This sequence belongs to the FrsA family.

The enzyme catalyses a carboxylic ester + H2O = an alcohol + a carboxylate + H(+). Catalyzes the hydrolysis of esters. In Escherichia coli O7:K1 (strain IAI39 / ExPEC), this protein is Esterase FrsA.